Reading from the N-terminus, the 223-residue chain is Ubiquitin carboxyl-terminal hydrolase isozyme L1 (223 aa).

N-acetylmethionine is present on methionine 1. A UCH catalytic domain is found at glutamine 2–lysine 221. The interaction with ubiquitin stretch occupies residues proline 5 to proline 10. Cysteine 90 acts as the Nucleophile in catalysis. Serine 125 is modified (phosphoserine). Histidine 161 functions as the Proton donor in the catalytic mechanism. The interaction with ubiquitin stretch occupies residues glutamate 211–alanine 216. Cysteine 220 carries S-farnesyl cysteine lipidation. Residues lysine 221–alanine 223 constitute a propeptide, removed in mature form.

The protein belongs to the peptidase C12 family. In terms of assembly, monomer. Homodimer. Interacts with COPS5 and SNCA. O-glycosylated.

It localises to the cytoplasm. It is found in the endoplasmic reticulum membrane. It catalyses the reaction Thiol-dependent hydrolysis of ester, thioester, amide, peptide and isopeptide bonds formed by the C-terminal Gly of ubiquitin (a 76-residue protein attached to proteins as an intracellular targeting signal).. Ubiquitin-protein hydrolase involved both in the processing of ubiquitin precursors and of ubiquitinated proteins. This enzyme is a thiol protease that recognizes and hydrolyzes a peptide bond at the C-terminal glycine of ubiquitin. Also binds to free monoubiquitin and may prevent its degradation in lysosomes. The homodimer may have ATP-independent ubiquitin ligase activity. This chain is Ubiquitin carboxyl-terminal hydrolase isozyme L1 (UCHL1), found in Equus caballus (Horse).